Consider the following 307-residue polypeptide: NAD kinase 2 (307 aa).

Catalysis depends on D77, which acts as the Proton acceptor. NAD(+) contacts are provided by residues 77 to 78 (DG), 151 to 152 (NE), D181, 192 to 197 (TAYALS), and N251.

Belongs to the NAD kinase family. It depends on a divalent metal cation as a cofactor.

The protein localises to the cytoplasm. The enzyme catalyses NAD(+) + ATP = ADP + NADP(+) + H(+). Involved in the regulation of the intracellular balance of NAD and NADP, and is a key enzyme in the biosynthesis of NADP. Catalyzes specifically the phosphorylation on 2'-hydroxyl of the adenosine moiety of NAD to yield NADP. This Thermosynechococcus vestitus (strain NIES-2133 / IAM M-273 / BP-1) protein is NAD kinase 2.